The primary structure comprises 511 residues: Probable DNA ligase (511 aa).

Glu208 provides a ligand contact to ATP. Catalysis depends on Lys210, which acts as the N6-AMP-lysine intermediate. 6 residues coordinate ATP: Arg215, Arg230, Glu259, Phe299, Arg377, and Lys383.

This sequence belongs to the ATP-dependent DNA ligase family. Requires Mg(2+) as cofactor.

The enzyme catalyses ATP + (deoxyribonucleotide)n-3'-hydroxyl + 5'-phospho-(deoxyribonucleotide)m = (deoxyribonucleotide)n+m + AMP + diphosphate.. DNA ligase that seals nicks in double-stranded DNA during DNA replication, DNA recombination and DNA repair. The protein is Probable DNA ligase of Streptomyces griseus subsp. griseus (strain JCM 4626 / CBS 651.72 / NBRC 13350 / KCC S-0626 / ISP 5235).